We begin with the raw amino-acid sequence, 141 residues long: Hemoglobin subunit alpha (141 aa).

One can recognise a Globin domain in the interval 1 to 141; that stretch reads VLSPADKTNV…VSTVLTSKYR (141 aa). S3 carries the post-translational modification Phosphoserine. K7 carries the N6-succinyllysine modification. A Phosphothreonine modification is found at T8. N6-succinyllysine is present on K11. An N6-acetyllysine; alternate modification is found at K16. At K16 the chain carries N6-succinyllysine; alternate. Residue S35 is modified to Phosphoserine. K40 carries the post-translational modification N6-succinyllysine. H58 provides a ligand contact to O2. H87 is a heme b binding site. S102 carries the phosphoserine modification. T108 is subject to Phosphothreonine. 2 positions are modified to phosphoserine: S124 and S131. A phosphothreonine mark is found at T134 and T137. S138 bears the Phosphoserine mark.

Belongs to the globin family. Heterotetramer of two alpha chains and two beta chains. As to expression, red blood cells.

In terms of biological role, involved in oxygen transport from the lung to the various peripheral tissues. Its function is as follows. Hemopressin acts as an antagonist peptide of the cannabinoid receptor CNR1. Hemopressin-binding efficiently blocks cannabinoid receptor CNR1 and subsequent signaling. This chain is Hemoglobin subunit alpha (HBA), found in Physeter macrocephalus (Sperm whale).